The primary structure comprises 509 residues: MEEFQVYLELDRSQQHDFLYPLLFREYIYVLAHDHGLNSSMMSLEGGFYDNKSSSLSVKRLITRMYQRINLSIAANDSNQNPIFGHNNKLYSQIISEVFAAVVEIPFSLRLVAFLEGKEIEKSPNFQSIHSIFPFFEDKLSHLNYVLDVRIPYPICPEILVQTLREWVKDASSLHLLRFFLHEYFNSNSLITPKNSISVFLKSNPRLLLFLYNSHVYEYESILFFLCNQSSHLQSTSFQVLVERTYFYGKVEHLVEVFAKDFQDILGLVKDPFMHYVRYQGKSILASKDTPLLMNKWKYYLVGLWQWHFHASSQPGRVQLNHLYLGKYAINFLGYLSGVRLNSLLVRSQMLENSFLIDNSMKKVDTTVPIIHLIGSLTKARFCNALGHPISKSTWSDFSDSHLIDRFVRICRNLSHYYSGSSKKKSLYRVKYILRLSCVKSLVRKHKSTVRAFLKRLGSELLEEFLMEEEHVLALLFPRASSTSRRFYLYRGRIWYLDIFCINDLVNYQ.

The protein belongs to the intron maturase 2 family. MatK subfamily.

It localises to the plastid. The protein localises to the chloroplast. Functionally, usually encoded in the trnK tRNA gene intron. Probably assists in splicing its own and other chloroplast group II introns. This Citrus sinensis (Sweet orange) protein is Maturase K.